The following is a 203-amino-acid chain: Akirin-2 (203 aa).

A phosphoserine mark is found at S18 and S21. The Nuclear localization signal signature appears at 22 to 27 (PKRRRC). Phosphoserine is present on S57. The SYVS motif signature appears at 200-203 (SYVS).

This sequence belongs to the akirin family. As to quaternary structure, homodimer. Interacts with IPO9; the interaction is direct. Associates with 20S and 26S proteasomes. Interacts with SMARCD1; promoting SWI/SNF complex recruitment. Interacts with NFKBIZ. Interacts with YWHAB. Polyubiquitinated. Polyubiquitination is dependent of UBR5 that extends pre-ubiquitinated AKIRIN2. In terms of tissue distribution, widely expressed. Most abundant in the lung, followed by the skeletal muscle, heart, liver, fat, thymus, lymph node, small intestine, kidney and spleen. In skeletal muscle, expressed at higher level in fast extensor digitorum longus (EDL) and longissimus lumborum (LL) muscles than in slow soleus (SOL) muscles.

The protein resides in the nucleus. It localises to the cytoplasm. The protein localises to the membrane. In terms of biological role, molecular adapter that acts as a bridge between a variety of multiprotein complexes, and which is involved in embryonic development, immunity, myogenesis and brain development. Plays a key role in nuclear protein degradation by promoting import of proteasomes into the nucleus: directly binds to fully assembled 20S proteasomes at one end and to nuclear import receptor IPO9 at the other end, bridging them together and mediating the import of pre-assembled proteasome complexes through the nuclear pore. Involved in innate immunity by regulating the production of interleukin-6 (IL6) downstream of Toll-like receptor (TLR): acts by bridging the NF-kappa-B inhibitor NFKBIZ and the SWI/SNF complex, leading to promote induction of IL6. Also involved in adaptive immunity by promoting B-cell activation. Involved in brain development: required for the survival and proliferation of cerebral cortical progenitor cells. Involved in myogenesis: required for skeletal muscle formation and skeletal development, possibly by regulating expression of muscle differentiation factors. This chain is Akirin-2, found in Sus scrofa (Pig).